The sequence spans 491 residues: Glutamate--tRNA ligase (491 aa).

The 'HIGH' region motif lies at 13–23; that stretch reads PSPTGFLHIGN. Residues Cys-110, Cys-112, Cys-137, and His-139 each coordinate Zn(2+). The 'KMSKS' region signature appears at 254-258; that stretch reads KLSKR. An ATP-binding site is contributed by Lys-257.

The protein belongs to the class-I aminoacyl-tRNA synthetase family. Glutamate--tRNA ligase type 1 subfamily. As to quaternary structure, monomer. Requires Zn(2+) as cofactor.

It is found in the cytoplasm. The enzyme catalyses tRNA(Glu) + L-glutamate + ATP = L-glutamyl-tRNA(Glu) + AMP + diphosphate. Catalyzes the attachment of glutamate to tRNA(Glu) in a two-step reaction: glutamate is first activated by ATP to form Glu-AMP and then transferred to the acceptor end of tRNA(Glu). This is Glutamate--tRNA ligase from Listeria innocua serovar 6a (strain ATCC BAA-680 / CLIP 11262).